Consider the following 255-residue polypeptide: Triosephosphate isomerase (255 aa).

10-12 (NWK) contacts substrate. The active-site Electrophile is the histidine 96. Glutamate 168 serves as the catalytic Proton acceptor. Substrate-binding positions include glycine 174, serine 213, and 234–235 (GG).

It belongs to the triosephosphate isomerase family. As to quaternary structure, homodimer.

The protein resides in the cytoplasm. The enzyme catalyses D-glyceraldehyde 3-phosphate = dihydroxyacetone phosphate. The protein operates within carbohydrate biosynthesis; gluconeogenesis. It participates in carbohydrate degradation; glycolysis; D-glyceraldehyde 3-phosphate from glycerone phosphate: step 1/1. Functionally, involved in the gluconeogenesis. Catalyzes stereospecifically the conversion of dihydroxyacetone phosphate (DHAP) to D-glyceraldehyde-3-phosphate (G3P). This is Triosephosphate isomerase from Histophilus somni (strain 129Pt) (Haemophilus somnus).